The following is a 304-amino-acid chain: Non-specific ribonucleoside hydrolase RihC (304 aa).

Residue His-233 is part of the active site.

It belongs to the IUNH family. RihC subfamily.

Its function is as follows. Hydrolyzes both purine and pyrimidine ribonucleosides with a broad-substrate specificity. This Shigella boydii serotype 4 (strain Sb227) protein is Non-specific ribonucleoside hydrolase RihC.